The following is a 357-amino-acid chain: Homoserine kinase (357 aa).

It belongs to the GHMP kinase family. Homoserine kinase subfamily. As to quaternary structure, homodimer.

It catalyses the reaction L-homoserine + ATP = O-phospho-L-homoserine + ADP + H(+). Its pathway is amino-acid biosynthesis; L-threonine biosynthesis; L-threonine from L-aspartate: step 4/5. Its function is as follows. Commits homoserine to the threonine biosynthesis pathway by catalyzing its O-phosphorylation. This chain is Homoserine kinase (THR1), found in Candida albicans (strain SC5314 / ATCC MYA-2876) (Yeast).